The chain runs to 121 residues: Ribosome-binding factor A (121 aa).

It belongs to the RbfA family. Monomer. Binds 30S ribosomal subunits, but not 50S ribosomal subunits or 70S ribosomes.

It is found in the cytoplasm. Functionally, one of several proteins that assist in the late maturation steps of the functional core of the 30S ribosomal subunit. Associates with free 30S ribosomal subunits (but not with 30S subunits that are part of 70S ribosomes or polysomes). Required for efficient processing of 16S rRNA. May interact with the 5'-terminal helix region of 16S rRNA. The polypeptide is Ribosome-binding factor A (Clostridium tetani (strain Massachusetts / E88)).